A 204-amino-acid polypeptide reads, in one-letter code: Tumor protein D53 (204 aa).

The interval 1-20 (MEAQAQGLLETEPLQGTDED) is disordered. Residues 22 to 73 (VASADFSSMLSEEEKEELKAELVQLEDEITTLRQVLSAKERHLVEIKQKLGM) adopt a coiled-coil conformation. A phosphoserine mark is found at serine 29, serine 86, serine 122, and serine 131. Arginine 133 is modified (omega-N-methylarginine). Threonine 146 carries the phosphothreonine modification. A phosphoserine mark is found at serine 149 and serine 174.

Belongs to the TPD52 family. As to quaternary structure, forms a homodimer or heterodimer with other members of the family.

The sequence is that of Tumor protein D53 (TPD52L1) from Homo sapiens (Human).